Consider the following 136-residue polypeptide: Neuropeptide CCHamide-2 (136 aa).

A signal peptide spans 1–24 (MKSTISLLLVVICTVVLAAQQSQA). C28 and C35 are joined by a disulfide. H39 is modified (histidine amide). The segment at 42–78 (RSLSPGSGSGTGVGGGMGEAASGGQEPDYVRPNGLLP) is disordered. Positions 43–136 (SLSPGSGSGT…ANSAELNGVN (94 aa)) are excised as a propeptide. Residues 48–59 (SGSGTGVGGGMG) show a composition bias toward gly residues.

Expressed in endocrine cells of the larval midgut (at protein level). Also expressed in endocrine cells of the midgut of adult males and females (at protein level). In the midgut, expression occurs mainly in the anterior region (at protein level). In the larval central nervous system, expressed in about 40 neurons in the brain hemispheres and ventral nerve cord (at protein level). Highly expressed in larval and adult gut with low levels in larval and adult brain. Very little expression in the larval fat body. However, another study shows high levels of expression in the larval fat body as well as the larval gut with low levels in the larval central nervous system.

Its subcellular location is the secreted. In terms of biological role, ligand for the CCHamide-2 receptor CCHa2-R. In one study, shown to be an orexigenic peptide which induces appetite and stimulates food intake, leading to the release of insulin-like peptides which stimulate growth. In another study, shown to be a nutrient-sensitive peptide derived from peripheral tissues which controls growth by directly regulating the production and release of insulin-like peptides. This chain is Neuropeptide CCHamide-2, found in Drosophila melanogaster (Fruit fly).